The following is a 111-amino-acid chain: Cell division protein FtsB (111 aa).

At 1–3 the chain is on the cytoplasmic side; sequence MRL. A helical membrane pass occupies residues 4–21; it reads ITLFLLLLLLAIQYPLWL. The Periplasmic portion of the chain corresponds to 22–111; it reads GKGGWLRVWD…PPPAGQQAHH (90 aa). Residues 31–64 adopt a coiled-coil conformation; the sequence is DMQKQVTAQNQRNAELKQRNTKLEGEVKDLKEGT. Residues 89–111 are disordered; it reads APAPKTSETPLPPPPPAGQQAHH.

It belongs to the FtsB family. Part of a complex composed of FtsB, FtsL and FtsQ.

The protein localises to the cell inner membrane. In terms of biological role, essential cell division protein. May link together the upstream cell division proteins, which are predominantly cytoplasmic, with the downstream cell division proteins, which are predominantly periplasmic. In Ralstonia pickettii (strain 12J), this protein is Cell division protein FtsB.